Here is a 497-residue protein sequence, read N- to C-terminus: Probable sensor kinase SilS (497 aa).

Residues 1-15 are Cytoplasmic-facing; sequence MHSKPSRLPFSLALR. The chain crosses the membrane as a helical span at residues 16-36; it reads LTFFISLSTILAFIAFTWFML. The Periplasmic segment spans residues 37 to 186; that stretch reads HSVEKHFAEQ…HLHYLDALKK (150 aa). Residues 187–207 traverse the membrane as a helical segment; it reads NLIAIAVVISLLIVLIIRIAV. One can recognise an HAMP domain in the interval 208-261; sequence RQGHLPLRNVSNAIKNITSENLDARLEPTRVPIELEQLVISFNHMIGKIEDVFT. The Cytoplasmic segment spans residues 208-497; that stretch reads RQGHLPLRNV…KMIPDTQCWE (290 aa). The 219-residue stretch at 269 to 487 folds into the Histidine kinase domain; the sequence is DIAHEIRTPI…RFILSVPRLE (219 aa). Histidine 272 carries the phosphohistidine; by autocatalysis modification.

It localises to the cell inner membrane. It catalyses the reaction ATP + protein L-histidine = ADP + protein N-phospho-L-histidine.. Its function is as follows. Component of the sil cation-efflux system that confers resistance to silver. Probable member of a two-component regulatory system SilS/SilR. May activate SilR by phosphorylation. This chain is Probable sensor kinase SilS (silS), found in Salmonella typhimurium.